The sequence spans 724 residues: Catalase-peroxidase (724 aa).

The segment at 1 to 26 (MDENKTKPTGKCPVMHGGNTSTGSSN) is disordered. The segment at residues 98 to 225 (WHSAGSYRTT…LAAVQMGLIY (128 aa)) is a cross-link (tryptophyl-tyrosyl-methioninium (Trp-Tyr) (with M-251)). Residue H99 is the Proton acceptor of the active site. Residues 225 to 251 (YVNPEGVDGKSDPLRTAQDMRVTFSRM) constitute a cross-link (tryptophyl-tyrosyl-methioninium (Tyr-Met) (with W-98)). Position 266 (H266) interacts with heme b.

This sequence belongs to the peroxidase family. Peroxidase/catalase subfamily. Homodimer or homotetramer. Heme b is required as a cofactor. In terms of processing, formation of the three residue Trp-Tyr-Met cross-link is important for the catalase, but not the peroxidase activity of the enzyme.

It catalyses the reaction H2O2 + AH2 = A + 2 H2O. The enzyme catalyses 2 H2O2 = O2 + 2 H2O. Functionally, bifunctional enzyme with both catalase and broad-spectrum peroxidase activity. This Pectobacterium atrosepticum (strain SCRI 1043 / ATCC BAA-672) (Erwinia carotovora subsp. atroseptica) protein is Catalase-peroxidase.